A 311-amino-acid chain; its full sequence is MPISKTLPYNAIEQIKSYLLQLQNTICVSLESIDGKTRFHEDSWQRAAGGGGKTRIMANGNVFEKAGVNFSHVSGEQLPASASAHREELAGRHFSALGVSLVIHPQNPYVPTTHANVRFFVAEKEDSEPVWWFGGGFDLTPYYGFVEDCEHWHQTALNACLPFGETIYPKFKRWCDDYFFIKHRNEARGIGGLFFDDYNEISFDHSFELMRSIGDHFILAYEPIVARRKDIPFGNREKAFQNYRRGRYAEFNLVYDRGTLFGLQSGGRTESILMSLPPIVHWEYNWHPEKGSDEEKLYTDFLPAKDWLKKE.

Ser-100 contributes to the substrate binding site. A divalent metal cation-binding residues include His-104 and His-114. The Proton donor role is filled by His-114. 116–118 provides a ligand contact to substrate; the sequence is NVR. A divalent metal cation-binding residues include His-153 and His-183. Positions 248–283 are important for dimerization; sequence YAEFNLVYDRGTLFGLQSGGRTESILMSLPPIVHWE. Residue 266–268 participates in substrate binding; sequence GGR.

This sequence belongs to the aerobic coproporphyrinogen-III oxidase family. In terms of assembly, homodimer. Requires a divalent metal cation as cofactor.

The protein resides in the cytoplasm. The enzyme catalyses coproporphyrinogen III + O2 + 2 H(+) = protoporphyrinogen IX + 2 CO2 + 2 H2O. It participates in porphyrin-containing compound metabolism; protoporphyrin-IX biosynthesis; protoporphyrinogen-IX from coproporphyrinogen-III (O2 route): step 1/1. Involved in the heme biosynthesis. Catalyzes the aerobic oxidative decarboxylation of propionate groups of rings A and B of coproporphyrinogen-III to yield the vinyl groups in protoporphyrinogen-IX. The sequence is that of Oxygen-dependent coproporphyrinogen-III oxidase from Legionella pneumophila (strain Corby).